The primary structure comprises 380 residues: Probable G-protein coupled receptor 132 (380 aa).

Residues 1–45 are Extracellular-facing; it reads MCPMLLKNGYNGNATPVTTTAPWASLGLSAKTCNNVSFEESRIVL. Residue asparagine 35 is glycosylated (N-linked (GlcNAc...) asparagine). Residues 46–68 form a helical membrane-spanning segment; sequence VVVYSAVCTLGVPANCLTAWLAL. At 69–79 the chain is on the cytoplasmic side; that stretch reads LQVLQGNVLAV. Residues 80 to 102 form a helical membrane-spanning segment; sequence YLLCLALCELLYTGTLPLWVIYI. Residues 103-116 are Extracellular-facing; sequence RNQHRWTLGLLACK. Cysteine 115 and cysteine 186 are disulfide-bonded. A helical membrane pass occupies residues 117–138; that stretch reads VTAYIFFCNIYVSILFLCCISC. The Cytoplasmic portion of the chain corresponds to 139–158; that stretch reads DRFVAVVYALESRGRRRRRT. Residues 159–178 form a helical membrane-spanning segment; the sequence is AILISACIFILVGIVHYPVF. Over 179 to 197 the chain is Extracellular; the sequence is QTEDKETCFDMLQMDSRIA. The chain crosses the membrane as a helical span at residues 198-220; the sequence is GYYYARFTVGFAIPLSIIAFTNH. At 221–246 the chain is on the cytoplasmic side; that stretch reads RIFRSIKQSMGLSAAQKAKVKHSAIA. Residues 247 to 269 form a helical membrane-spanning segment; the sequence is VVVIFLVCFAPYHLVLLVKAAAF. The Extracellular portion of the chain corresponds to 270-288; it reads SYYRGDRNAMCGLEERLYT. Residues 289–311 form a helical membrane-spanning segment; that stretch reads ASVVFLCLSTVNGVADPIIYVLA. The Cytoplasmic portion of the chain corresponds to 312 to 380; sequence TDHSRQEVSR…PAKRLIEESC (69 aa).

It belongs to the G-protein coupled receptor 1 family. Highly expressed in macrophages and hematopoietic tissues rich in lymphocytes, like spleen and thymus. Weakly expressed in heart and lung. In atherosclerotic plaques, expression is observed around the lipid core and at the shoulder region.

Its subcellular location is the cell membrane. Functionally, may be a receptor for oxidized free fatty acids derived from linoleic and arachidonic acids such as 9-hydroxyoctadecadienoic acid (9-HODE). Activates a G alpha protein, most likely G alpha(q). May be involved in apoptosis. Functions at the G2/M checkpoint to delay mitosis. May function as a sensor that monitors the oxidative states and mediates appropriate cellular responses such as secretion of paracrine signals and attenuation of proliferation. May mediate ths accumulation of intracellular inositol phosphates at acidic pH through proton-sensing activity. This is Probable G-protein coupled receptor 132 (GPR132) from Homo sapiens (Human).